A 381-amino-acid chain; its full sequence is Homoserine O-succinyltransferase (381 aa).

The AB hydrolase-1 domain occupies 45–360; that stretch reads NAVLVCHALN…PHGHDAFLLD (316 aa). The active-site Nucleophile is serine 151. Arginine 221 serves as a coordination point for substrate. Active-site residues include aspartate 321 and histidine 354. Aspartate 355 serves as a coordination point for substrate.

This sequence belongs to the AB hydrolase superfamily. MetX family. In terms of assembly, homodimer.

Its subcellular location is the cytoplasm. The catalysed reaction is L-homoserine + succinyl-CoA = O-succinyl-L-homoserine + CoA. It participates in amino-acid biosynthesis; L-methionine biosynthesis via de novo pathway; O-succinyl-L-homoserine from L-homoserine: step 1/1. In terms of biological role, transfers a succinyl group from succinyl-CoA to L-homoserine, forming succinyl-L-homoserine. This chain is Homoserine O-succinyltransferase, found in Burkholderia cenocepacia (strain HI2424).